Reading from the N-terminus, the 238-residue chain is MNPEQFQMALAEKGIELSDDQMKQFHDYFEMLVEWNEKMNLTAITDEKEVYLKHFYDSISAAFYVDFTKFDTICDVGAGAGFPSLPIKICFPHLKVSIVDSLKKRMTFLDALAEKLGLTDVHFYHDRAETFGQNKAHREKYDLVTARAVARMSVLSELCMPLVKKGGSFLVMKAAQAEQELQTAEKAIKLFGGKVEEHFSFSLPVEESERNIYVITKTKETPNKYPRKPGTPNKLPIE.

Residues G77, F82, A128–E129, and R147 each bind S-adenosyl-L-methionine. A disordered region spans residues K219–E238.

This sequence belongs to the methyltransferase superfamily. RNA methyltransferase RsmG family.

It is found in the cytoplasm. Specifically methylates the N7 position of guanine in position 535 of 16S rRNA. The protein is Ribosomal RNA small subunit methyltransferase G of Listeria monocytogenes serovar 1/2a (strain ATCC BAA-679 / EGD-e).